A 186-amino-acid chain; its full sequence is Elongation factor P (186 aa).

Belongs to the elongation factor P family.

It localises to the cytoplasm. Its pathway is protein biosynthesis; polypeptide chain elongation. Its function is as follows. Involved in peptide bond synthesis. Stimulates efficient translation and peptide-bond synthesis on native or reconstituted 70S ribosomes in vitro. Probably functions indirectly by altering the affinity of the ribosome for aminoacyl-tRNA, thus increasing their reactivity as acceptors for peptidyl transferase. The sequence is that of Elongation factor P from Enterococcus faecalis (strain ATCC 700802 / V583).